The following is a 476-amino-acid chain: Angiotensinogen (476 aa).

The N-terminal stretch at 1 to 24 (MAPAGMSLRATILCLLAWAGLAAG) is a signal peptide. Asn-38, Asn-161, Asn-295, and Asn-319 each carry an N-linked (GlcNAc...) asparagine glycan. Cys-42 and Cys-162 form a disulfide bridge.

This sequence belongs to the serpin family. In response to low blood pressure, the enzyme renin/REN cleaves angiotensinogen to produce angiotensin-1. Angiotensin-1 is a substrate of ACE (angiotensin converting enzyme) that removes a dipeptide to yield the physiologically active peptide angiotensin-2. Angiotensin-1 and angiotensin-2 can be further processed to generate angiotensin-3, angiotensin-4. Angiotensin 1-9 is cleaved from angiotensin-1 by ACE2 and can be further processed by ACE to produce angiotensin 1-7, angiotensin 1-5 and angiotensin 1-4. Angiotensin 1-7 has also been proposed to be cleaved from angiotensin-2 by ACE2 or from angiotensin-1 by MME (neprilysin). In terms of processing, the disulfide bond is labile. Angiotensinogen is present in the circulation in a near 40:60 ratio with the oxidized disulfide-bonded form, which preferentially interacts with receptor-bound renin.

It is found in the secreted. In terms of biological role, essential component of the renin-angiotensin system (RAS), a potent regulator of blood pressure, body fluid and electrolyte homeostasis. Its function is as follows. Acts directly on vascular smooth muscle as a potent vasoconstrictor, affects cardiac contractility and heart rate through its action on the sympathetic nervous system, and alters renal sodium and water absorption through its ability to stimulate the zona glomerulosa cells of the adrenal cortex to synthesize and secrete aldosterone. Acts by binding to angiotensin receptors AGTR1 and AGTR2. Also binds the DEAR/FBXW7-AS1 receptor. Stimulates aldosterone release. Functionally, is a ligand for the G-protein coupled receptor MAS1. Has vasodilator and antidiuretic effects. Has an antithrombotic effect that involves MAS1-mediated release of nitric oxide from platelets. In Gorilla gorilla gorilla (Western lowland gorilla), this protein is Angiotensinogen (AGT).